A 462-amino-acid polypeptide reads, in one-letter code: L-seryl-tRNA(Sec) selenium transferase (462 aa).

At Lys-292 the chain carries N6-(pyridoxal phosphate)lysine.

Belongs to the SelA family. Pyridoxal 5'-phosphate serves as cofactor.

It localises to the cytoplasm. It carries out the reaction L-seryl-tRNA(Sec) + selenophosphate + H(+) = L-selenocysteinyl-tRNA(Sec) + phosphate. It functions in the pathway aminoacyl-tRNA biosynthesis; selenocysteinyl-tRNA(Sec) biosynthesis; selenocysteinyl-tRNA(Sec) from L-seryl-tRNA(Sec) (bacterial route): step 1/1. Its function is as follows. Converts seryl-tRNA(Sec) to selenocysteinyl-tRNA(Sec) required for selenoprotein biosynthesis. The protein is L-seryl-tRNA(Sec) selenium transferase of Geotalea uraniireducens (strain Rf4) (Geobacter uraniireducens).